Consider the following 180-residue polypeptide: 3-deoxy-D-manno-octulosonate 8-phosphate phosphatase KdsC (180 aa).

Mg(2+)-binding residues include Asp-14 and Asp-16. Residues Asp-16, 37-41 (HVRDG), Lys-45, Arg-60, Arg-68, and Lys-84 each bind substrate. Residue Asp-107 coordinates Mg(2+).

The protein belongs to the KdsC family. As to quaternary structure, homotetramer. Mg(2+) serves as cofactor.

It carries out the reaction 3-deoxy-alpha-D-manno-2-octulosonate-8-phosphate + H2O = 3-deoxy-alpha-D-manno-oct-2-ulosonate + phosphate. Functionally, catalyzes the hydrolysis of 3-deoxy-D-manno-octulosonate 8-phosphate (KDO 8-P) to 3-deoxy-D-manno-octulosonate (KDO) and inorganic phosphate. This is 3-deoxy-D-manno-octulosonate 8-phosphate phosphatase KdsC from Haemophilus influenzae (strain ATCC 51907 / DSM 11121 / KW20 / Rd).